Here is a 503-residue protein sequence, read N- to C-terminus: Protein phosphatase eya-1 (503 aa).

Asp237 functions as the Nucleophile in the catalytic mechanism. Positions 237 and 239 each coordinate Mg(2+). Asp239 acts as the Proton donor in catalysis.

This sequence belongs to the HAD-like hydrolase superfamily. EYA family. As to quaternary structure, interacts (via C-terminus) with ceh-34 (via N-terminus). The cofactor is Mg(2+). Expressed in body wall muscles. Expressed in BAG sensory neurons and in other head neurons.

Its subcellular location is the nucleus. It catalyses the reaction O-phospho-L-tyrosyl-[protein] + H2O = L-tyrosyl-[protein] + phosphate. Functionally, tyrosine protein phosphatase. Acts probably as a transcription regulator in the embryonic and postembryonic development of several tissues including pharynx, vulva and gonads. Required for the development of anterior tissues during late embryogenesis. Together with ceh-34, required to specify the coelomocyte fate in embryonic and postembryonic precursors. In the anterior part of the embryo, prevents apoptosis in cells that are not fated to die. Together with ceh-34 activates proapoptotic factor egl-1 expression to promote motor neuron M4 sister cell apoptosis. Also promotes apoptosis of I1 pharyngeal neuron sister cell. Plays a role in locomotion and fertility. May play a role in resistance to heat and oxidative stresses. May cooperate with the transcription factors vab-3 and ceh-32 to repress transcription factor ets-5 expression in non BAG neuronal cells. The polypeptide is Protein phosphatase eya-1 (Caenorhabditis elegans).